A 267-amino-acid polypeptide reads, in one-letter code: 2-keto-3-deoxy-L-rhamnonate aldolase (267 aa).

His49 (proton acceptor) is an active-site residue. Substrate is bound at residue Gln151. Glu153 is a Mg(2+) binding site. Substrate contacts are provided by Ala178 and Asp179. Position 179 (Asp179) interacts with Mg(2+).

Belongs to the HpcH/HpaI aldolase family. KDR aldolase subfamily. Homohexamer. Mg(2+) serves as cofactor.

The catalysed reaction is 2-dehydro-3-deoxy-L-rhamnonate = (S)-lactaldehyde + pyruvate. Its function is as follows. Catalyzes the reversible retro-aldol cleavage of 2-keto-3-deoxy-L-rhamnonate (KDR) to pyruvate and lactaldehyde. This is 2-keto-3-deoxy-L-rhamnonate aldolase from Escherichia coli (strain UTI89 / UPEC).